An 87-amino-acid chain; its full sequence is Small ribosomal subunit protein eS21 (87 aa).

An N-acetylmethionine modification is found at methionine 1.

It belongs to the eukaryotic ribosomal protein eS21 family. Component of the small ribosomal subunit (SSU). Mature yeast ribosomes consist of a small (40S) and a large (60S) subunit. The 40S small subunit contains 1 molecule of ribosomal RNA (18S rRNA) and at least 33 different proteins. The large 60S subunit contains 3 rRNA molecules (25S, 5.8S and 5S rRNA) and at least 46 different proteins. Interacts with uS2A and uS2B, strongest interaction is with uS2B.

The protein resides in the cytoplasm. Its subcellular location is the nucleus. Component of the ribosome, a large ribonucleoprotein complex responsible for the synthesis of proteins in the cell. The small ribosomal subunit (SSU) binds messenger RNAs (mRNAs) and translates the encoded message by selecting cognate aminoacyl-transfer RNA (tRNA) molecules. The large subunit (LSU) contains the ribosomal catalytic site termed the peptidyl transferase center (PTC), which catalyzes the formation of peptide bonds, thereby polymerizing the amino acids delivered by tRNAs into a polypeptide chain. The nascent polypeptides leave the ribosome through a tunnel in the LSU and interact with protein factors that function in enzymatic processing, targeting, and the membrane insertion of nascent chains at the exit of the ribosomal tunnel. eS21 is required for the processing of the 20S rRNA-precursor to mature 18S rRNA in a late step of the maturation of 40S ribosomal subunits. Has a physiological role leading to 18S rRNA stability. The protein is Small ribosomal subunit protein eS21 (rps21) of Schizosaccharomyces pombe (strain 972 / ATCC 24843) (Fission yeast).